The following is a 392-amino-acid chain: Succinate--CoA ligase [ADP-forming] subunit beta (392 aa).

The ATP-grasp domain occupies 9 to 247; it reads KAILRKYGVA…VTEEDPLEVE (239 aa). ATP is bound by residues Lys49, 56–58, Glu102, Leu105, and Glu110; that span reads GRG. Mg(2+)-binding residues include Asn202 and Asp216. Substrate is bound by residues Asn267 and 324 to 326; that span reads GIL.

It belongs to the succinate/malate CoA ligase beta subunit family. As to quaternary structure, heterotetramer of two alpha and two beta subunits. Requires Mg(2+) as cofactor.

The enzyme catalyses succinate + ATP + CoA = succinyl-CoA + ADP + phosphate. It carries out the reaction GTP + succinate + CoA = succinyl-CoA + GDP + phosphate. It functions in the pathway carbohydrate metabolism; tricarboxylic acid cycle; succinate from succinyl-CoA (ligase route): step 1/1. Functionally, succinyl-CoA synthetase functions in the citric acid cycle (TCA), coupling the hydrolysis of succinyl-CoA to the synthesis of either ATP or GTP and thus represents the only step of substrate-level phosphorylation in the TCA. The beta subunit provides nucleotide specificity of the enzyme and binds the substrate succinate, while the binding sites for coenzyme A and phosphate are found in the alpha subunit. This is Succinate--CoA ligase [ADP-forming] subunit beta from Koribacter versatilis (strain Ellin345).